A 332-amino-acid polypeptide reads, in one-letter code: Putative pumilio homolog 17 (332 aa).

Positions 1–302 (MTNINRLSMS…ILTADLFYSL (302 aa)) constitute a PUM-HD domain. One copy of the Pumilio 1 repeat lies at 82–117 (SDSDYFMVITRNKNGSKSLQKLMRMSDDMDVFFFVA). One copy of the Pumilio 2; degenerate repeat lies at 118–152 (IMRLFIHVMIDKYASYVAIQGMRIFKQDKRELMYD). 4 Pumilio repeats span residues 153 to 188 (HILRYALFLARDQYGCIALNEIIKELDDPYYRDELM), 189 to 225 (DIVSNNALLLSNDAYGNFVVQHVLKLHDSRCTGNIAD), 226 to 264 (KLCGYCVELSFKKYGSYIVERLLEVRDIPMATIVLDLLA), and 265 to 300 (CKTEMLIRLARSENGNFVVCKLLELTNDILTADLFY).

The protein resides in the cytoplasm. Functionally, sequence-specific RNA-binding protein that regulates translation and mRNA stability by binding the 3'-UTR of target mRNAs. This chain is Putative pumilio homolog 17 (APUM17), found in Arabidopsis thaliana (Mouse-ear cress).